The sequence spans 479 residues: Glutamyl-tRNA(Gln) amidotransferase subunit A (479 aa).

Catalysis depends on charge relay system residues Lys-71 and Ser-146. Residue Ser-170 is the Acyl-ester intermediate of the active site.

Belongs to the amidase family. GatA subfamily. In terms of assembly, heterotrimer of A, B and C subunits.

The enzyme catalyses L-glutamyl-tRNA(Gln) + L-glutamine + ATP + H2O = L-glutaminyl-tRNA(Gln) + L-glutamate + ADP + phosphate + H(+). Allows the formation of correctly charged Gln-tRNA(Gln) through the transamidation of misacylated Glu-tRNA(Gln) in organisms which lack glutaminyl-tRNA synthetase. The reaction takes place in the presence of glutamine and ATP through an activated gamma-phospho-Glu-tRNA(Gln). The sequence is that of Glutamyl-tRNA(Gln) amidotransferase subunit A from Lactobacillus acidophilus (strain ATCC 700396 / NCK56 / N2 / NCFM).